A 430-amino-acid polypeptide reads, in one-letter code: MTSVVVVGTQWGDEGKGKITDFLSANAEVIARYQGGDNAGHTIVIDGKKYKLHLIPSGIFFPEKISVIGNGMVVNPKSLVKELNYLHEEGVTTDNLRISDRAHVILPYHIELDRLQEEAKGDNKIGTTIKGIGPAYMDKAARVGIRIADLLDRDIFRERLERNLAEKNRLFEKLYDSTAIKIDDIFEEYYEYGQQIKQYVTDTSVILNNALDQGKRVLFEGAQGVMLDIDQGTYPFVTSSNPVAGGVTIGSGVGPSKIDKVVGVCKAYTSRVGDGPFPTELFDEVGDRIREVGHEYGTTTGRPRRVGWFDSVVMRHSRRVSGITNLSLNSIDVLSGLDTVKICVAYDLDGQRIDHYPASLEQLKRCKPIYEELPGWSEDITGVRKLEDLPENARNYVRRVSELVGVRISTFSVGPDRDQTNILESVWSSL.

GTP-binding positions include Gly12 to Lys18 and Gly40 to Thr42. Asp13 (proton acceptor) is an active-site residue. Mg(2+) contacts are provided by Asp13 and Gly40. IMP-binding positions include Asp13–Lys16, Asn38–His41, Thr128, Arg142, Gln223, Thr238, and Arg302. His41 functions as the Proton donor in the catalytic mechanism. Thr298–Arg304 contributes to the substrate binding site. GTP is bound by residues Arg304, Ser330–Asp332, and Ser412–Gly414.

It belongs to the adenylosuccinate synthetase family. In terms of assembly, homodimer. Requires Mg(2+) as cofactor.

It is found in the cytoplasm. It carries out the reaction IMP + L-aspartate + GTP = N(6)-(1,2-dicarboxyethyl)-AMP + GDP + phosphate + 2 H(+). It functions in the pathway purine metabolism; AMP biosynthesis via de novo pathway; AMP from IMP: step 1/2. In terms of biological role, plays an important role in the de novo pathway of purine nucleotide biosynthesis. Catalyzes the first committed step in the biosynthesis of AMP from IMP. The chain is Adenylosuccinate synthetase from Streptococcus gordonii (strain Challis / ATCC 35105 / BCRC 15272 / CH1 / DL1 / V288).